Consider the following 465-residue polypeptide: D-arabinitol 4-dehydrogenase (465 aa).

This sequence belongs to the mannitol dehydrogenase family.

It carries out the reaction D-arabinitol + NAD(+) = D-xylulose + NADH + H(+). The protein operates within carbohydrate metabolism; D-arabinitol metabolism. This Ralstonia nicotianae (strain ATCC BAA-1114 / GMI1000) (Ralstonia solanacearum) protein is D-arabinitol 4-dehydrogenase (dalD).